The chain runs to 390 residues: Succinate--CoA ligase [ADP-forming] subunit beta (390 aa).

The 237-residue stretch at 9–245 (KHLLKKYNIP…TTQEDEHETM (237 aa)) folds into the ATP-grasp domain. ATP contacts are provided by residues K46, 53–55 (GRG), E99, S102, and E107. Positions 200 and 214 each coordinate Mg(2+). Residues N265 and 322 to 324 (GIV) contribute to the substrate site.

This sequence belongs to the succinate/malate CoA ligase beta subunit family. In terms of assembly, heterotetramer of two alpha and two beta subunits. Mg(2+) serves as cofactor.

It catalyses the reaction succinate + ATP + CoA = succinyl-CoA + ADP + phosphate. The enzyme catalyses GTP + succinate + CoA = succinyl-CoA + GDP + phosphate. It functions in the pathway carbohydrate metabolism; tricarboxylic acid cycle; succinate from succinyl-CoA (ligase route): step 1/1. Functionally, succinyl-CoA synthetase functions in the citric acid cycle (TCA), coupling the hydrolysis of succinyl-CoA to the synthesis of either ATP or GTP and thus represents the only step of substrate-level phosphorylation in the TCA. The beta subunit provides nucleotide specificity of the enzyme and binds the substrate succinate, while the binding sites for coenzyme A and phosphate are found in the alpha subunit. The chain is Succinate--CoA ligase [ADP-forming] subunit beta from Coxiella burnetii (strain Dugway 5J108-111).